The primary structure comprises 268 residues: Tryptophan synthase alpha chain (268 aa).

Active-site proton acceptor residues include E49 and D60.

The protein belongs to the TrpA family. Tetramer of two alpha and two beta chains.

The catalysed reaction is (1S,2R)-1-C-(indol-3-yl)glycerol 3-phosphate + L-serine = D-glyceraldehyde 3-phosphate + L-tryptophan + H2O. It participates in amino-acid biosynthesis; L-tryptophan biosynthesis; L-tryptophan from chorismate: step 5/5. Functionally, the alpha subunit is responsible for the aldol cleavage of indoleglycerol phosphate to indole and glyceraldehyde 3-phosphate. The protein is Tryptophan synthase alpha chain of Escherichia coli O6:H1 (strain CFT073 / ATCC 700928 / UPEC).